The following is a 251-amino-acid chain: MIDAHTHLDVRSFEDLEKMALSGIETIITCAHDPYKMSTPEVYLDHWDRLINLEVKRGEMAGVEVKVAVGVHPMGYPKNWEVLIKKLPEFLDNENVVAIGETGLHYLTEDEKNLLREQLYLAKDYNMPIIIHTPEKNKKEALIEILKILDEVKIKDSLVMIDHINKETVDLIDRDVYVGLTVQPSMKLTHEEAAEIIKNYNKKFILSSDLGSLKADIYALPRTKLYMKNIGVDEEKIIASVYKNAKGFYRL.

Residues His-5, His-7, Glu-101, His-132, His-163, and Asp-209 each contribute to the a divalent metal cation site.

It belongs to the metallo-dependent hydrolases superfamily. TatD-type hydrolase family. A divalent metal cation is required as a cofactor.

This is an uncharacterized protein from Methanocaldococcus jannaschii (strain ATCC 43067 / DSM 2661 / JAL-1 / JCM 10045 / NBRC 100440) (Methanococcus jannaschii).